The following is a 562-amino-acid chain: Potassium-transporting ATPase potassium-binding subunit (562 aa).

A run of 12 helical transmembrane segments spans residues 6–26 (FLLIASFMVVLFVLSRPLGGF), 63–83 (ALAILCFNLLGIVLLFVLLMA), 132–152 (GLTVQNFLSAATGIAVAFALI), 175–195 (LYVLLPIALIIALIFVSQGVL), 253–273 (FVQMLAIFLIPCALCFAFGQV), 283–303 (LIWAMSLIFIVAVVVVMYAEL), 327–347 (FGILATSLYAVVTTAASCGAV), 356–376 (ALGGMIPLWLMQIGEVVFGGV), 379–399 (GLYGMLLFVLLTVFIAGLMIG), 416–436 (MTALAILVTPTIVLLGTALAL), 483–503 (LLLAAAMFIGRFGVILPVLAI), and 526–546 (LFIGLLIGTVLLVGALTFIPA).

The protein belongs to the KdpA family. As to quaternary structure, the system is composed of three essential subunits: KdpA, KdpB and KdpC.

It is found in the cell inner membrane. Functionally, part of the high-affinity ATP-driven potassium transport (or Kdp) system, which catalyzes the hydrolysis of ATP coupled with the electrogenic transport of potassium into the cytoplasm. This subunit binds the periplasmic potassium ions and delivers the ions to the membrane domain of KdpB through an intramembrane tunnel. This Yersinia pseudotuberculosis serotype O:1b (strain IP 31758) protein is Potassium-transporting ATPase potassium-binding subunit.